The primary structure comprises 457 residues: Heme sensor protein HssS (457 aa).

The next 2 helical transmembrane spans lie at 9–29 and 164–184; these read IAIY…VLTN and TFLA…VIAS. The HAMP domain maps to 186-238; the sequence is YSIIRPVKKLKLATERLIDGDFETPIKQTRKDEIGTLQYHFNKMRESLGQVDQ. The Histidine kinase domain maps to 246–456; the sequence is NVSHEIKTPL…TFTITLPNNS (211 aa). At His-249 the chain carries Phosphohistidine; by autocatalysis.

Autophosphorylated.

Its subcellular location is the cell membrane. The enzyme catalyses ATP + protein L-histidine = ADP + protein N-phospho-L-histidine.. Its function is as follows. Member of the two-component regulatory system HssS/HssR involved in intracellular heme homeostasis and tempering of staphylococcal virulence. HssS functions as a heme sensor histidine kinase which is autophosphorylated at a histidine residue and transfers its phosphate group to an aspartate residue of HssR. HssR/HssS activates the expression of hrtAB, an efflux pump, in response to extracellular heme, hemin, hemoglobin or blood. The polypeptide is Heme sensor protein HssS (hssS) (Staphylococcus aureus (strain Mu3 / ATCC 700698)).